The primary structure comprises 346 residues: Glycosyltransferase 1 domain-containing protein 1 (346 aa).

The signal sequence occupies residues 1–16; the sequence is MRLLFLAVLRPHTGNA.

It belongs to the glycosyltransferase group 1 family. Glycosyltransferase 4 subfamily.

It localises to the secreted. The protein is Glycosyltransferase 1 domain-containing protein 1 (GLT1D1) of Homo sapiens (Human).